A 626-amino-acid polypeptide reads, in one-letter code: Chaperone protein HtpG (626 aa).

Positions 1 to 332 (MTNNDTPGMR…TEDLPLNVSR (332 aa)) are a; substrate-binding. Positions 333-546 (EVVQSSKVMA…KDSLDSSMEK (214 aa)) are b. The interval 547 to 626 (MMKMMHAEMP…ELIEAATMSR (80 aa)) is c.

The protein belongs to the heat shock protein 90 family. Homodimer.

The protein localises to the cytoplasm. In terms of biological role, molecular chaperone. Has ATPase activity. This is Chaperone protein HtpG from Chlorobium phaeobacteroides (strain DSM 266 / SMG 266 / 2430).